The sequence spans 405 residues: Solute carrier family 35 member E2B (405 aa).

The interval 1–28 is disordered; sequence MSSSVKTPALEELVPGSEEKPKGRSPLS. Transmembrane regions (helical) follow at residues 81-101, 106-126, 142-162, 167-187, 195-215, 219-241, 264-284, 296-316, 326-346, and 347-367; these read LWFFFSFCTLFLNKYILSLLG, MLGAVQMLSTTVIGCVKTLVP, FLMTMLFVGLMRFATVVLGLV, VAVSFAETVKSSAPIFTVIMS, TGLLVNLSLIPVMGGLALCTA, SFNVLGFSAALSTNIMDCLQNVF, AAAVAMLVPARVFFTDVPVIG, VVLLLLTDGVLFHLQSVTAYA, FSVASTVKHALSIWLSVIVFG, and NKITSLSAVGTALVTVGVLLY. The disordered stretch occupies residues 380–405; that stretch reads SLAAATGRAPDDTVEPLLPQDPRQHP.

This sequence belongs to the TPT transporter family. SLC35E subfamily.

Its subcellular location is the membrane. Putative transporter. The chain is Solute carrier family 35 member E2B (SLC35E2B) from Homo sapiens (Human).